The following is an 848-amino-acid chain: Probable serine/threonine-protein kinase DDB_G0278535 (848 aa).

Composition is skewed to low complexity over residues Met-1–His-52, Thr-60–Thr-85, and Thr-95–Ser-116. The segment at Met-1 to Val-117 is disordered. ANK repeat units lie at residues Met-181–Ile-212, Ser-218–Ile-248, Asp-252–Ala-285, Asn-289–Val-320, and Arg-324–Ile-353. The region spanning Lys-378–Gln-441 is the SAM domain. A disordered region spans residues Asn-448–Asn-478. Residues Thr-452–Ser-472 are compositionally biased toward low complexity. In terms of domain architecture, Protein kinase spans Leu-529 to Met-799. ATP contacts are provided by residues Leu-535–Val-543 and Lys-556. The active-site Proton acceptor is Asp-650. The segment at Arg-810–Thr-848 is disordered. A compositionally biased stretch (low complexity) spans Thr-822–Thr-848.

The protein belongs to the protein kinase superfamily. TKL Ser/Thr protein kinase family.

It carries out the reaction L-seryl-[protein] + ATP = O-phospho-L-seryl-[protein] + ADP + H(+). The catalysed reaction is L-threonyl-[protein] + ATP = O-phospho-L-threonyl-[protein] + ADP + H(+). This chain is Probable serine/threonine-protein kinase DDB_G0278535, found in Dictyostelium discoideum (Social amoeba).